Here is an 843-residue protein sequence, read N- to C-terminus: Probable cleavage and polyadenylation specificity factor subunit 2 (843 aa).

Residues 414-425 show a composition bias toward basic and acidic residues; sequence AEETRLRMERAR. Disordered regions lie at residues 414–443 and 691–753; these read AEET…DIAA and DKNR…TKGK. Over residues 432–441 the composition is skewed to acidic residues; that stretch reads ESDDSDDDDI. Residues 732–746 are compositionally biased toward basic and acidic residues; sequence SGKEVENGHTNDSRT.

Belongs to the metallo-beta-lactamase superfamily. RNA-metabolizing metallo-beta-lactamase-like family. CPSF2/YSH1 subfamily. In terms of assembly, CPSF is a heterotetramer composed of four distinct subunits 160, 100, 70 and 30 kDa.

The protein localises to the nucleus. In terms of biological role, CPSF plays a key role in pre-mRNA 3'-end formation, recognizing the AAUAAA signal sequence and interacting with poly(A)polymerase and other factors to bring about cleavage and poly(A) addition. The chain is Probable cleavage and polyadenylation specificity factor subunit 2 (cpsf-2) from Caenorhabditis elegans.